Here is a 399-residue protein sequence, read N- to C-terminus: Elongation factor Tu (399 aa).

The 198-residue stretch at 10–207 folds into the tr-type G domain; that stretch reads KPHVNVGTIG…ALDSYIPEPV (198 aa). The interval 19–26 is G1; it reads GHIDHGKT. 19–26 provides a ligand contact to GTP; it reads GHIDHGKT. Thr26 is a binding site for Mg(2+). A G2 region spans residues 60-64; that stretch reads GITIN. Positions 81-84 are G3; sequence DCPG. Residues 81 to 85 and 136 to 139 contribute to the GTP site; these read DCPGH and NKVD. The G4 stretch occupies residues 136–139; sequence NKVD. A G5 region spans residues 174–176; sequence SAL.

Belongs to the TRAFAC class translation factor GTPase superfamily. Classic translation factor GTPase family. EF-Tu/EF-1A subfamily. In terms of assembly, monomer.

The protein localises to the cytoplasm. The catalysed reaction is GTP + H2O = GDP + phosphate + H(+). GTP hydrolase that promotes the GTP-dependent binding of aminoacyl-tRNA to the A-site of ribosomes during protein biosynthesis. This chain is Elongation factor Tu, found in Pseudothermotoga lettingae (strain ATCC BAA-301 / DSM 14385 / NBRC 107922 / TMO) (Thermotoga lettingae).